The sequence spans 323 residues: PI-PLC X domain-containing protein 1 (323 aa).

The 177-residue stretch at 30-206 folds into the PI-PLC X-box domain; that stretch reads RLWDVPLHHL…QVIVSYEDES (177 aa).

As to expression, widely expressed.

The protein resides in the cytoplasm. In Homo sapiens (Human), this protein is PI-PLC X domain-containing protein 1 (PLCXD1).